Reading from the N-terminus, the 338-residue chain is Phenylalanine--tRNA ligase alpha subunit (338 aa).

Glu-253 lines the Mg(2+) pocket.

It belongs to the class-II aminoacyl-tRNA synthetase family. Phe-tRNA synthetase alpha subunit type 1 subfamily. Tetramer of two alpha and two beta subunits. Mg(2+) serves as cofactor.

The protein localises to the cytoplasm. It carries out the reaction tRNA(Phe) + L-phenylalanine + ATP = L-phenylalanyl-tRNA(Phe) + AMP + diphosphate + H(+). The polypeptide is Phenylalanine--tRNA ligase alpha subunit (Syntrophus aciditrophicus (strain SB)).